Consider the following 804-residue polypeptide: MANPIRKLVDNSKKQLKKLNHIADKVEDYADEMAALSDEALQAKTPVFKEKIADALRDVTETDKQNKVLAKTLDALLPEAFAVAREAAKRVLGLYPFRVQIMGAAVLNDGNLAEMRTGEGKTLTATMAVYLNALTDRGVHVVTVNDYLSARDAEQMGQLYNWLGLSVGVNVGDAPAEEKRAAYDADITYSTNFNIGFDYLRDNMVRRAEERVMQRGLNFALIDEADSILIDTARTPLIISGPGSGVSQLYGRADRFVKTLQQDEDYKIDEEAKTTMLTNDGIHKGEIFFNLDNLYDAGDTALTHHIDQALRANFNYINDKDYVVQDGEVKLIDQSTGRISEGTRLSDGLHQAIEAKEGVEIQEENKSMAQITYQNLFRMYKKLSGMTGTAKTEEEELREIYNMEVITIPTNRPIKRVDYPDLLYPSIRAKYNAVVKLIQELHEKGQPILIGTGSVESSELLSKILMAQNVPHNVLNAKNNAKEAEIIANAGQRGAVTVATNMAGRGTDIKLGPGVADLGGLAVIATERHESRRIDNQLRGRAGRQGDDGFSQFFLSLEDDLMIRFGAERIRAVWERMNLDEEETVIKNRLITRSVESAQKRVEGNNYDTRKNVLQYDDVVREQRELIYHQRDIIIDESQSLDWVLMPMVSRTINRVVTVQTKSKKPSEWQLQQIIVFAENVLVNEGALTENDLSGLSREDIEAKLYALAKENYANKKRQLYEPEQMLEFEKVVILRAVDQHWTDHIDALDRLRQGVGLRGYGQLNPLIEYQNEAFENFNKMIADVEYDATRTFMKAEIRQNLKA.

Residues Gln-100, 118–122, and Asp-508 contribute to the ATP site; that span reads GEGKT.

This sequence belongs to the SecA family. Monomer and homodimer. Part of the essential Sec protein translocation apparatus which comprises SecA, SecYEG and auxiliary proteins SecDF. Other proteins may also be involved.

Its subcellular location is the cell membrane. The protein resides in the cytoplasm. The enzyme catalyses ATP + H2O + cellular proteinSide 1 = ADP + phosphate + cellular proteinSide 2.. Its function is as follows. Part of the Sec protein translocase complex. Interacts with the SecYEG preprotein conducting channel. Has a central role in coupling the hydrolysis of ATP to the transfer of proteins into and across the cell membrane, serving as an ATP-driven molecular motor driving the stepwise translocation of polypeptide chains across the membrane. The sequence is that of Protein translocase subunit SecA from Leuconostoc citreum (strain KM20).